Consider the following 210-residue polypeptide: GRF1-interacting factor 1 (210 aa).

Positions 135-152 (ATLQHQQLHHSQLGMSSS) are enriched in low complexity. The segment at 135-210 (ATLQHQQLHH…LYLKSSDDGN (76 aa)) is disordered. Residues 182 to 198 (GSGGGGEGRGGSSGDGG) show a composition bias toward gly residues.

This sequence belongs to the SS18 family. As to quaternary structure, interacts with GRF1, GRF2, GRF5 and GRF9. In terms of tissue distribution, strongly expressed in actively growing and developing tissues, such as roots, upper stems, and shoot tips and flower buds. Also expressed in mature flowers. Not expressed in the shoot apical meristem (SAM). Highly accumulated in the proximal part of leaf primordia, in the key proliferative zone at the junction region between the leaf blade and leaf petiole.

Functionally, transcription coactivator that plays a role in the regulation of cell expansion in leaf and cotyledons tissues. Component of a network formed by miR396, the GRFs and their interacting factors (GIFs) acting in the regulation of meristem function, at least partially through the control of cell proliferation. Appears to function synergistically with GRF1 as a transcriptional coactivator. Acts together with GRF5 for the development of appropriate leaf size and shape through the promotion and/or maintenance of cell proliferation activity in leaf primordia. Plays a role in adaxial/abaxial patterning and growth in leaf morphogenesis. GIFs are involved in the positive regulation of cell proliferation of lateral organs in a functionally redundant manner. Together with GATA18/HAN, mediates cotyledon identity by preventing ectopic root formation through the repression of PLT1 expression. The sequence is that of GRF1-interacting factor 1 from Arabidopsis thaliana (Mouse-ear cress).